The sequence spans 431 residues: Histidinol dehydrogenase (431 aa).

NAD(+) is bound by residues Y129, Q191, and N214. Residues S237, Q259, and H262 each contribute to the substrate site. Residues Q259 and H262 each contribute to the Zn(2+) site. Catalysis depends on proton acceptor residues E327 and H328. Substrate contacts are provided by H328, D361, E415, and H420. D361 lines the Zn(2+) pocket. Zn(2+) is bound at residue H420.

This sequence belongs to the histidinol dehydrogenase family. Requires Zn(2+) as cofactor.

The enzyme catalyses L-histidinol + 2 NAD(+) + H2O = L-histidine + 2 NADH + 3 H(+). It functions in the pathway amino-acid biosynthesis; L-histidine biosynthesis; L-histidine from 5-phospho-alpha-D-ribose 1-diphosphate: step 9/9. Catalyzes the sequential NAD-dependent oxidations of L-histidinol to L-histidinaldehyde and then to L-histidine. The polypeptide is Histidinol dehydrogenase (hisD) (Lactococcus lactis subsp. lactis (strain IL1403) (Streptococcus lactis)).